A 359-amino-acid polypeptide reads, in one-letter code: Molybdenum import ATP-binding protein ModC (359 aa).

Residues M1–V233 form the ABC transporter domain. G32 to T39 lines the ATP pocket. Residues A289 to A355 form the Mop domain.

Belongs to the ABC transporter superfamily. Molybdate importer (TC 3.A.1.8) family. As to quaternary structure, the complex is composed of two ATP-binding proteins (ModC), two transmembrane proteins (ModB) and a solute-binding protein (ModA).

It localises to the cell inner membrane. It catalyses the reaction molybdate(out) + ATP + H2O = molybdate(in) + ADP + phosphate + H(+). Functionally, part of the ABC transporter complex ModABC involved in molybdenum import. Responsible for energy coupling to the transport system. The chain is Molybdenum import ATP-binding protein ModC from Brucella abortus (strain 2308).